A 428-amino-acid polypeptide reads, in one-letter code: ATP-dependent RNA helicase RhlB (428 aa).

A Q motif motif is present at residues 9 to 37; sequence KKFSDFALHPKVIEALDNKGFSNCTPIQA. The region spanning 40-219 is the Helicase ATP-binding domain; sequence LPFTVEGRDV…FEQMNHAEYI (180 aa). Residue 53–60 participates in ATP binding; it reads AQTGTGKT. A DEAD box motif is present at residues 165-168; it reads DEAD. Positions 245–390 constitute a Helicase C-terminal domain; that stretch reads RLLQTLLEEE…VSKYNSQALL (146 aa). The interval 392–428 is disordered; sequence DLPAPKRRYRSRSGNHQRRNNLSHRNNTPRNNRKRSG. Residues 396–413 are compositionally biased toward basic residues; it reads PKRRYRSRSGNHQRRNNL.

It belongs to the DEAD box helicase family. RhlB subfamily. In terms of assembly, component of the RNA degradosome, which is a multiprotein complex involved in RNA processing and mRNA degradation.

The protein resides in the cytoplasm. It catalyses the reaction ATP + H2O = ADP + phosphate + H(+). In terms of biological role, DEAD-box RNA helicase involved in RNA degradation. Has RNA-dependent ATPase activity and unwinds double-stranded RNA. The sequence is that of ATP-dependent RNA helicase RhlB from Photorhabdus laumondii subsp. laumondii (strain DSM 15139 / CIP 105565 / TT01) (Photorhabdus luminescens subsp. laumondii).